The chain runs to 447 residues: DNA primase DnaG (447 aa).

In terms of domain architecture, Toprim spans 200-274 (DSIIVVEGRA…DIDYVARAPE (75 aa)). Mg(2+)-binding residues include E206, D248, and D250. The interval 316–339 (ERRRGGARKQEYTKKGSLNPQPQV) is disordered.

Belongs to the archaeal DnaG primase family. As to quaternary structure, forms a ternary complex with MCM helicase and DNA. Component of the archaeal exosome complex. Requires Mg(2+) as cofactor.

It catalyses the reaction ssDNA + n NTP = ssDNA/pppN(pN)n-1 hybrid + (n-1) diphosphate.. Its function is as follows. RNA polymerase that catalyzes the synthesis of short RNA molecules used as primers for DNA polymerase during DNA replication. Also part of the exosome, which is a complex involved in RNA degradation. Acts as a poly(A)-binding protein that enhances the interaction between heteromeric, adenine-rich transcripts and the exosome. This Pyrococcus furiosus (strain ATCC 43587 / DSM 3638 / JCM 8422 / Vc1) protein is DNA primase DnaG.